The sequence spans 116 residues: ATP-dependent Clp protease adapter protein ClpS (116 aa).

The span at 1–11 (MRRINTIMQGK) shows a compositional bias: polar residues. Positions 1 to 23 (MRRINTIMQGKTNGGNGPESGTV) are disordered.

The protein belongs to the ClpS family. In terms of assembly, binds to the N-terminal domain of the chaperone ClpA.

In terms of biological role, involved in the modulation of the specificity of the ClpAP-mediated ATP-dependent protein degradation. The chain is ATP-dependent Clp protease adapter protein ClpS from Brucella abortus (strain S19).